The primary structure comprises 136 residues: MAKEFSRGQRVAQEMQKEIAIILQREVKDPRVGMATVSGVEVSRDLAYAKVYVTFLNVLTENADPNLVPNGIKALEDASGYIRTLLGKAMRLRVVPELTFAYDNSLVEGMRMSNLVTNVVKNDAERRSASGDDEEA.

This sequence belongs to the RbfA family. Monomer. Binds 30S ribosomal subunits, but not 50S ribosomal subunits or 70S ribosomes.

The protein resides in the cytoplasm. Functionally, one of several proteins that assist in the late maturation steps of the functional core of the 30S ribosomal subunit. Associates with free 30S ribosomal subunits (but not with 30S subunits that are part of 70S ribosomes or polysomes). Required for efficient processing of 16S rRNA. May interact with the 5'-terminal helix region of 16S rRNA. This is Ribosome-binding factor A from Serratia proteamaculans (strain 568).